Reading from the N-terminus, the 286-residue chain is Protein NipSnap homolog 2 (286 aa).

The N-terminal 23 residues, 1–23, are a transit peptide targeting the mitochondrion; the sequence is MAARVLRARGAAWAGGLLQRAAP.

It belongs to the NipSnap family. As to quaternary structure, interacts with CALCOCO2/NDP52, NBR1, SQSTM1/p62, TAX1BP1 and WDFY3/ALFY. Interacts with ATG8 family proteins (MAP1LC3A, MAP1LC3B, MAP1LC3C, GABARAP, GABARAPL1 and GABARAPL2). Interacts with VDAC1. In terms of tissue distribution, widely expressed. Most abundant in heart and skeletal muscle.

It is found in the mitochondrion matrix. Its function is as follows. Protein involved in mitophagy by facilitating recruitment of the autophagy machinery required for clearance of damaged mitochondria. Accumulates on the mitochondria surface in response to mitochondrial depolarization and acts as a 'eat me' signal by recruiting proteins involved in selective autophagy, such as autophagy receptors (CALCOCO2/NDP52, NBR1, SQSTM1/p62, TAX1BP1 and WDFY3/ALFY) and ATG8 family proteins (MAP1LC3A, MAP1LC3B, MAP1LC3C, GABARAP, GABARAPL1 and GABARAPL2). The chain is Protein NipSnap homolog 2 from Homo sapiens (Human).